We begin with the raw amino-acid sequence, 525 residues long: Peptide chain release factor 3 (525 aa).

Residues Ala-8–Gln-276 enclose the tr-type G domain. Residues Ser-17 to Thr-24, Asp-85 to His-89, and Asn-139 to Asp-142 each bind GTP.

Belongs to the TRAFAC class translation factor GTPase superfamily. Classic translation factor GTPase family. PrfC subfamily.

The protein resides in the cytoplasm. Increases the formation of ribosomal termination complexes and stimulates activities of RF-1 and RF-2. It binds guanine nucleotides and has strong preference for UGA stop codons. It may interact directly with the ribosome. The stimulation of RF-1 and RF-2 is significantly reduced by GTP and GDP, but not by GMP. The protein is Peptide chain release factor 3 of Coxiella burnetii (strain RSA 331 / Henzerling II).